The primary structure comprises 351 residues: MLYSLVKKYLFSLDAEIAHEKVCQILRTLSSSPFLCRLIHSQWGYKNPKLENEILGLNFPNPLGLAAGFDKNASMLRALIAFGFGYLEAGTLTNIAQSGNEKPRLFRHIEEESLQNAMGFNNYGAILGVRAFNRFAPYKTPIGINLGKNKHIEQAHALEDYQAVLNQCLNIGDYYTFNLSSPNTPNLRDLQNKVFVNELFCMAKEMTHKPLFLKIAPDLEIDSMLEVVNSAIEAGANGIIATNTTIDKSLVFAPKEMGGLSGKCLTKKSREIFKELAKAFFNKSVLVSVGGISDAKEAYERIKMGASLLQIYSAFIYKGPNLCQNILKDLVKLLQKDGFLSVKEAIGADLR.

FMN contacts are provided by residues 67–71 (AGFDK) and threonine 91. A substrate-binding site is contributed by lysine 71. Substrate is bound at residue 116 to 120 (NAMGF). Positions 145 and 178 each coordinate FMN. Asparagine 178 contacts substrate. The active-site Nucleophile is serine 181. Asparagine 183 lines the substrate pocket. Lysine 214 and threonine 242 together coordinate FMN. Residue 243–244 (NT) coordinates substrate. FMN-binding positions include glycine 262, glycine 291, and 312 to 313 (YS).

It belongs to the dihydroorotate dehydrogenase family. Type 2 subfamily. In terms of assembly, monomer. The cofactor is FMN.

The protein localises to the cell membrane. The enzyme catalyses (S)-dihydroorotate + a quinone = orotate + a quinol. Its pathway is pyrimidine metabolism; UMP biosynthesis via de novo pathway; orotate from (S)-dihydroorotate (quinone route): step 1/1. In terms of biological role, catalyzes the conversion of dihydroorotate to orotate with quinone as electron acceptor. The protein is Dihydroorotate dehydrogenase (quinone) (pyrD) of Helicobacter pylori (strain J99 / ATCC 700824) (Campylobacter pylori J99).